The following is a 656-amino-acid chain: MMEPSEYHEYQARGKEMVDYICQYLSTVRERQVTPNVKPGYLRAQIPSSAPEEPDSWDSIFGDIEQIIMPGVVHWQSPHMHAYYPALTSWPSLLGDMLADAINCLGFTWASSPACTELEMNIMDWLAKMLGLPDFFLHHHPSSQGGGVLQRTVSESTLIALLAARKNKILEMKAHEPNADESSLNARLVAYASDQAHSSVEKAGLISLVKIKFLPVDDNFSLRGEALQKAIEEDKQQGLVPVFVCATLGTTGVCAFDKLSELGPICAREGLWLHVDAAYAGTAFLRPELRGFLKGIEYADSFTFNPSKWMMVHFDCTGFWVKDKYKLQQTFSVNPIYLRHANSGVATDFMHWQIPLSRRFRSIKLWFVIRSFGVKNLQAHVRHGTDMAKYFESLVRSDPVFEIPAERHLGLVVFRLKGPNCLTESVLKEIAKTGQVFLIPATIQDKLIIRFTVTSQFTTKDDILRDWNLIREAANLVLSQHCTSQPSPRAKNLIPPPVTRDSKDLTNGLSLESVNEGGDDPVQVRKIFRLPGDSLETTMDPFDDCFSEEASDTTKHKLSSFLFSYLSVQNKKKTMRSLSCNSMPMSAQKSPPPDASVKHGGFFRARIFSGFPEEMMMMKKGGFKKLIKFYSVPSFPECSSQCGTLQLPCCPLQAMV.

Substrate is bound by residues Tyr-84 and His-197. Lys-308 carries the N6-(pyridoxal phosphate)lysine modification. Phosphoserine; by PKA occurs at positions 343 and 362. Residues 481-502 form a disordered region; it reads HCTSQPSPRAKNLIPPPVTRDS.

The protein belongs to the group II decarboxylase family. As to quaternary structure, homodimer. It depends on pyridoxal 5'-phosphate as a cofactor. Post-translationally, may be post-translationally processed. As to expression, brain, glandular regions of the stomach, mast cells and fetal liver.

The enzyme catalyses L-histidine + H(+) = histamine + CO2. It functions in the pathway amine and polyamine biosynthesis; histamine biosynthesis; histamine from L-histidine: step 1/1. With respect to regulation, phosphorylation of brain HDC by cAMP-dependent protein kinase leads to enzyme inactivation. Functionally, catalyzes the biosynthesis of histamine from histidine. In Rattus norvegicus (Rat), this protein is Histidine decarboxylase (Hdc).